The chain runs to 297 residues: Ribosomal RNA small subunit methyltransferase H (297 aa).

Residues 35 to 37 (GGH), D55, F82, D100, and Q107 each bind S-adenosyl-L-methionine.

This sequence belongs to the methyltransferase superfamily. RsmH family.

Its subcellular location is the cytoplasm. The catalysed reaction is cytidine(1402) in 16S rRNA + S-adenosyl-L-methionine = N(4)-methylcytidine(1402) in 16S rRNA + S-adenosyl-L-homocysteine + H(+). Specifically methylates the N4 position of cytidine in position 1402 (C1402) of 16S rRNA. The polypeptide is Ribosomal RNA small subunit methyltransferase H (Chlamydia caviae (strain ATCC VR-813 / DSM 19441 / 03DC25 / GPIC) (Chlamydophila caviae)).